Reading from the N-terminus, the 513-residue chain is Exoglucanase 1 (513 aa).

A signal peptide spans 1 to 17 (MYRKLAVISAFLATARA). At glutamine 18 the chain carries Pyrrolidone carboxylic acid. The segment at 18–453 (QSACTLQSET…GSTGNPSGGN (436 aa)) is catalytic. Intrachain disulfides connect cysteine 21-cysteine 89, cysteine 36-cysteine 42, cysteine 67-cysteine 88, cysteine 78-cysteine 84, cysteine 155-cysteine 414, cysteine 189-cysteine 227, cysteine 193-cysteine 226, cysteine 247-cysteine 273, cysteine 255-cysteine 260, and cysteine 278-cysteine 348. The N-linked (GlcNAc) asparagine glycan is linked to asparagine 62. Residue glutamate 229 is the Nucleophile of the active site. The active-site Proton donor/acceptor is glutamate 234. N-linked (GlcNAc) asparagine glycans are attached at residues asparagine 287 and asparagine 401. Residues 401 to 437 (NETSSTPGAVRGSCSTSSGVPAQVESQSPNAKVTFSN) show a composition bias toward polar residues. The tract at residues 401 to 480 (NETSSTPGAV…TGSSPGPTQS (80 aa)) is disordered. Over residues 449 to 459 (PSGGNPPGGNR) the composition is skewed to gly residues. The linker stretch occupies residues 454–477 (PPGGNRGTTTTRRPATTTGSSPGP). The span at 460 to 478 (GTTTTRRPATTTGSSPGPT) shows a compositional bias: low complexity. O-linked (Man) threonine glycosylation occurs at threonine 461. 3 O-linked (Man...) threonine glycosylation sites follow: threonine 462, threonine 463, and threonine 464. Threonine 469 is a glycosylation site (O-linked (Man) threonine). O-linked (Man...) threonine glycosylation is found at threonine 470 and threonine 471. Residues serine 473 and serine 474 are each glycosylated (O-linked (Man) serine). In terms of domain architecture, CBM1 spans 477–513 (PTQSHYGQCGGIGYSGPTVCASGTTCQVLNPYYSQCL). O-linked (Man) threonine glycosylation is present at threonine 478. Residues serine 480 and serine 491 are each glycosylated (O-linked (Man) serine). 2 cysteine pairs are disulfide-bonded: cysteine 485–cysteine 502 and cysteine 496–cysteine 512.

Belongs to the glycosyl hydrolase 7 (cellulase C) family. N-glycosylated. The catalytic core domain comprises three N-linked glycans which each consist of a single N-acetylglucosamine residue. In terms of processing, O-glycosylated. Within the linker domain, all 8 threonines are variably glycosylated with between at least one, and up to three, mannose residues per site. All serines in this domain are at least partially glycosylated with a single mannose residue. O-glycosylation of the cellulase linker provides protection from proteolysis. Linker glycans also contribute to binding affinity of cellobiohydrolases to cellulose.

It is found in the secreted. The catalysed reaction is Hydrolysis of (1-&gt;4)-beta-D-glucosidic linkages in cellulose and cellotetraose, releasing cellobiose from the non-reducing ends of the chains.. Its function is as follows. Exocellobiohydrolases (CBH) that catalyzes the hydrolysis of 1,4-beta-D-glucosidic bonds in cellulose to release the disaccharide cellobiose. The degradation of cellulose involves an interplay between different cellulolytic enzymes. Hydrolysis starts with endoglucanases (EGs), which cut internal beta-1,4-glucosidic bonds in cellulose to reduce the polymerization degree of the substrate and create new chain ends for exocellobiohydrolases (CBHs). The CBHs release the disaccharide cellobiose from the non-reducing end of the cellulose polymer chain. Finally, beta-1,4-glucosidases hydrolyze the cellobiose and other short cello-oligosaccharides into glucose units. The sequence is that of Exoglucanase 1 (cbh1) from Hypocrea jecorina (Trichoderma reesei).